The chain runs to 568 residues: Adenine deaminase (568 aa).

Belongs to the metallo-dependent hydrolases superfamily. Adenine deaminase family. Mn(2+) is required as a cofactor.

The catalysed reaction is adenine + H2O + H(+) = hypoxanthine + NH4(+). The sequence is that of Adenine deaminase from Clostridium perfringens (strain ATCC 13124 / DSM 756 / JCM 1290 / NCIMB 6125 / NCTC 8237 / Type A).